A 587-amino-acid chain; its full sequence is Monocopper oxidase-like protein SKU5 (587 aa).

A signal peptide spans 1–20 (MDLFKILLLVFFVNISFCFA). N-linked (GlcNAc...) asparagine glycosylation is found at N14 and N58. H80 is a binding site for Cu cation. Residues N107, N169, N200, N257, N278, N293, N342, N362, N430, and N444 are each glycosylated (N-linked (GlcNAc...) asparagine). H452 is a Cu cation binding site. N534 carries an N-linked (GlcNAc...) asparagine glycan. S562 carries the GPI-anchor amidated serine lipid modification. Residues 563–587 (ASKSIGFTSLSMVVMALVMMMMLQH) constitute a propeptide, removed in mature form.

This sequence belongs to the multicopper oxidase family. Requires Cu cation as cofactor. Expressed in roots, hypocotyls, cotyledons, leaves, stems and flowers.

The protein localises to the secreted. It localises to the cell wall. Its subcellular location is the cell membrane. May be a monocopper oxidase of unknown specificity. Involved in directional growth processes, possibly by participating in cell wall expansion. This chain is Monocopper oxidase-like protein SKU5 (SKU5), found in Arabidopsis thaliana (Mouse-ear cress).